A 202-amino-acid chain; its full sequence is dTTP/UTP pyrophosphatase (202 aa).

The Proton acceptor role is filled by aspartate 80.

Belongs to the Maf family. YhdE subfamily. The cofactor is a divalent metal cation.

Its subcellular location is the cytoplasm. It carries out the reaction dTTP + H2O = dTMP + diphosphate + H(+). The enzyme catalyses UTP + H2O = UMP + diphosphate + H(+). Functionally, nucleoside triphosphate pyrophosphatase that hydrolyzes dTTP and UTP. May have a dual role in cell division arrest and in preventing the incorporation of modified nucleotides into cellular nucleic acids. The sequence is that of dTTP/UTP pyrophosphatase from Alkalilimnicola ehrlichii (strain ATCC BAA-1101 / DSM 17681 / MLHE-1).